The sequence spans 316 residues: Ribosomal RNA small subunit methyltransferase H (316 aa).

S-adenosyl-L-methionine-binding positions include 35–37, D55, F84, D105, and Q112; that span reads AGH.

Belongs to the methyltransferase superfamily. RsmH family.

It localises to the cytoplasm. It carries out the reaction cytidine(1402) in 16S rRNA + S-adenosyl-L-methionine = N(4)-methylcytidine(1402) in 16S rRNA + S-adenosyl-L-homocysteine + H(+). In terms of biological role, specifically methylates the N4 position of cytidine in position 1402 (C1402) of 16S rRNA. The polypeptide is Ribosomal RNA small subunit methyltransferase H (Streptococcus thermophilus (strain CNRZ 1066)).